We begin with the raw amino-acid sequence, 296 residues long: MPHTLLILNGKESGNPEVREAVKNVRDEGLTLHVRITWEHGDAKRYVEEAATLAVSTVIAGGGDGTINEVATALMSLPADKRPCLGILPLGTANDFATGCNIPLQIENALQLAVKGRAVAIDLAQVNGEHYFINMATGGFGTRITTETPDKLKAALGGVSYFIHGLMRLDALKADSCKIHGPDFHWSGDALVIGIGNGKQAGGGQLLCPDALINDGLMQLRLLTAKELLPAVLSTLFNGEKNKNVIDATVPWLDITAPNDITFNLDGEPLSGRHFHIEILPHAIQCRLPPNCPLLG.

In terms of domain architecture, DAGKc spans 1–130; it reads MPHTLLILNG…IDLAQVNGEH (130 aa). ATP contacts are provided by residues threonine 37, 63–69, and threonine 92; that span reads GDGTINE. Mg(2+)-binding residues include leucine 212, aspartate 215, and leucine 217. Glutamate 268 serves as the catalytic Proton acceptor.

It belongs to the diacylglycerol/lipid kinase family. YegS lipid kinase subfamily. It depends on Mg(2+) as a cofactor. Ca(2+) serves as cofactor.

The protein localises to the cytoplasm. In terms of biological role, probably phosphorylates lipids; the in vivo substrate is unknown. The polypeptide is Probable lipid kinase YegS-like (Yersinia pestis bv. Antiqua (strain Angola)).